The chain runs to 379 residues: Nitric oxide reductase FlRd-NAD(+) reductase (379 aa).

This sequence belongs to the FAD-dependent oxidoreductase family. FAD is required as a cofactor.

Its subcellular location is the cytoplasm. It carries out the reaction 2 reduced [nitric oxide reductase rubredoxin domain] + NAD(+) + H(+) = 2 oxidized [nitric oxide reductase rubredoxin domain] + NADH. The protein operates within nitrogen metabolism; nitric oxide reduction. Functionally, one of at least two accessory proteins for anaerobic nitric oxide (NO) reductase. Reduces the rubredoxin moiety of NO reductase. This chain is Nitric oxide reductase FlRd-NAD(+) reductase, found in Pectobacterium atrosepticum (strain SCRI 1043 / ATCC BAA-672) (Erwinia carotovora subsp. atroseptica).